We begin with the raw amino-acid sequence, 432 residues long: FMRFamide peptide receptor frpr-18 (432 aa).

Residues Met1–Ala8 are Extracellular-facing. A helical membrane pass occupies residues Cys9–Phe29. Topologically, residues Ser30 to Leu42 are cytoplasmic. A helical transmembrane segment spans residues Leu43–Ile63. Residues Pro64–Lys84 are Extracellular-facing. A helical membrane pass occupies residues Leu85 to Thr105. The Cytoplasmic segment spans residues Leu106–Arg128. A helical transmembrane segment spans residues Asn129 to Tyr149. Topologically, residues Arg150 to Gly176 are extracellular. A helical transmembrane segment spans residues Tyr177–Ala197. At Asn198–Thr225 the chain is on the cytoplasmic side. A helical membrane pass occupies residues Thr226 to Leu246. Over Asn247–Asp271 the chain is Extracellular. A helical transmembrane segment spans residues Leu272–Ser292. The Cytoplasmic portion of the chain corresponds to Glu293 to Cys432. 2 disordered regions span residues Ile328–Ser349 and Lys388–Glu411.

The protein belongs to the G-protein coupled receptor 1 family. In terms of tissue distribution, expressed in a subset of neurons in the head, midbody, and tail, including AIY, ASI, BAG, URA, CAN, I6, PVQ, DVA, RIM, and VC, and in the anal sphincter and intestinal muscles. Expression from the ASI neurons is involved in promoting arousal.

The protein resides in the cell membrane. Functionally, G-protein coupled receptor for flp-2 neuropeptides. May act through the G(q) alpha type of G proteins. Involved in mediating arousal from the sleep-like state called lethargus, which occurs during molting between larval and adult stages, in part by regulating touch sensitivity, and working in concert with neuropeptide pdf-1. The chain is FMRFamide peptide receptor frpr-18 from Caenorhabditis elegans.